A 1429-amino-acid polypeptide reads, in one-letter code: Dicer-like protein 2 (1429 aa).

In terms of domain architecture, Helicase ATP-binding spans 21–200; the sequence is MFEASLKGNI…TIEMNLNSVC (180 aa). ATP is bound at residue 34–41; that stretch reads MGTGSGKT. The DEAH box motif lies at 141–144; that stretch reads DEAH. Positions 335-501 constitute a Helicase C-terminal domain; it reads ALISFLMSTE…EDRRRTEELR (167 aa). The 95-residue stretch at 528 to 622 folds into the Dicer dsRNA-binding fold domain; the sequence is AMQHLVHFCD…LPLTKSREFT (95 aa). RNase III domains lie at 874–1014 and 1056–1250; these read ATRL…IDGG and QENL…VDSG. Mg(2+)-binding residues include E1095, D1236, and E1239.

Belongs to the helicase family. Dicer subfamily. It depends on Mg(2+) as a cofactor. The cofactor is Mn(2+).

Its function is as follows. Dicer-like endonuclease involved in cleaving double-stranded RNA in the RNA interference (RNAi) pathway. Produces 21 to 25 bp dsRNAs (siRNAs) which target the selective destruction of homologous RNAs leading to sequence-specific suppression of gene expression, called post-transcriptional gene silencing (PTGS). Part of a broad host defense response against viral infection and transposons. In Emericella nidulans (strain FGSC A4 / ATCC 38163 / CBS 112.46 / NRRL 194 / M139) (Aspergillus nidulans), this protein is Dicer-like protein 2 (dcl2).